The sequence spans 302 residues: Protein FdhE homolog (302 aa).

This sequence belongs to the FdhE family.

It is found in the cytoplasm. Its function is as follows. Necessary for formate dehydrogenase activity. This chain is Protein FdhE homolog, found in Shewanella oneidensis (strain ATCC 700550 / JCM 31522 / CIP 106686 / LMG 19005 / NCIMB 14063 / MR-1).